Here is a 141-residue protein sequence, read N- to C-terminus: Hemoglobin subunit alpha-1 (141 aa).

One can recognise a Globin domain in the interval V1 to R141. H58 contacts O2. H87 is a binding site for heme b.

It belongs to the globin family. In terms of assembly, heterotetramer of two alpha chains and two beta chains. As to expression, red blood cells.

In terms of biological role, involved in oxygen transport from the lung to the various peripheral tissues. This is Hemoglobin subunit alpha-1 from Tachyglossus aculeatus aculeatus (Southeast Australian short-beaked echidna).